A 208-amino-acid polypeptide reads, in one-letter code: Vacuolar iron transporter homolog 5 (208 aa).

The Cytoplasmic segment spans residues 1 to 41; it reads MAAMMNNERSSSNKLQVDAENPAAVGDELDLAARANWLRAA. The helical transmembrane segment at 42–62 threads the bilayer; sequence VLGANDGLVSTASLMLGVGAV. Over 63-69 the chain is Vacuolar; that stretch reads KAEARAM. The chain crosses the membrane as a helical span at residues 70–90; it reads VISGFAGLLAGACSMAIGEFV. The Cytoplasmic segment spans residues 91-125; it reads SVCSQRDVELAQLERDGKRGGEEEKALPSPAQAAA. A helical transmembrane segment spans residues 126–146; sequence ASAMAFSVGAVVPLLAAGFIV. Residues 147-151 lie on the Vacuolar side of the membrane; the sequence is NYRLR. Residues 152 to 172 form a helical membrane-spanning segment; sequence IAVVVAVASVALAAFGCVGAV. The Cytoplasmic portion of the chain corresponds to 173 to 184; it reads LGRAAVARSSAR. A helical membrane pass occupies residues 185–205; sequence VVLGGWAAMGITFGLMRLFKA. At 206–208 the chain is on the vacuolar side; that stretch reads SGI.

It belongs to the CCC1 family.

The protein localises to the vacuole membrane. The enzyme catalyses Fe(2+)(in) = Fe(2+)(out). Its function is as follows. Probable vacuolar iron transporter that may be involved in the regulation of iron distribution throughout the plant. The sequence is that of Vacuolar iron transporter homolog 5 from Oryza sativa subsp. japonica (Rice).